Here is a 576-residue protein sequence, read N- to C-terminus: Probable DNA ligase (576 aa).

An ATP-binding site is contributed by E235. Residue K237 is the N6-AMP-lysine intermediate of the active site. ATP contacts are provided by R242, R257, E285, F324, R422, and K428.

It belongs to the ATP-dependent DNA ligase family. It depends on Mg(2+) as a cofactor.

The enzyme catalyses ATP + (deoxyribonucleotide)n-3'-hydroxyl + 5'-phospho-(deoxyribonucleotide)m = (deoxyribonucleotide)n+m + AMP + diphosphate.. Its function is as follows. DNA ligase that seals nicks in double-stranded DNA during DNA replication, DNA recombination and DNA repair. This Koribacter versatilis (strain Ellin345) protein is Probable DNA ligase.